A 159-amino-acid polypeptide reads, in one-letter code: SsrA-binding protein (159 aa).

The interval 137–159 (DKRETEKQRDWSREKGRLLKERG) is disordered.

The protein belongs to the SmpB family.

It is found in the cytoplasm. Functionally, required for rescue of stalled ribosomes mediated by trans-translation. Binds to transfer-messenger RNA (tmRNA), required for stable association of tmRNA with ribosomes. tmRNA and SmpB together mimic tRNA shape, replacing the anticodon stem-loop with SmpB. tmRNA is encoded by the ssrA gene; the 2 termini fold to resemble tRNA(Ala) and it encodes a 'tag peptide', a short internal open reading frame. During trans-translation Ala-aminoacylated tmRNA acts like a tRNA, entering the A-site of stalled ribosomes, displacing the stalled mRNA. The ribosome then switches to translate the ORF on the tmRNA; the nascent peptide is terminated with the 'tag peptide' encoded by the tmRNA and targeted for degradation. The ribosome is freed to recommence translation, which seems to be the essential function of trans-translation. The polypeptide is SsrA-binding protein (Mesorhizobium japonicum (strain LMG 29417 / CECT 9101 / MAFF 303099) (Mesorhizobium loti (strain MAFF 303099))).